Reading from the N-terminus, the 377-residue chain is UPF0425 pyridoxal phosphate-dependent protein MTH_1914 (377 aa).

Lysine 207 carries the post-translational modification N6-(pyridoxal phosphate)lysine.

The protein belongs to the UPF0425 family. Pyridoxal 5'-phosphate serves as cofactor.

The chain is UPF0425 pyridoxal phosphate-dependent protein MTH_1914 from Methanothermobacter thermautotrophicus (strain ATCC 29096 / DSM 1053 / JCM 10044 / NBRC 100330 / Delta H) (Methanobacterium thermoautotrophicum).